A 103-amino-acid chain; its full sequence is Large ribosomal subunit protein bL32m (103 aa).

The N-terminal 47 residues, 1–47, are a transit peptide targeting the mitochondrion; it reads MALLRGNSLAISQKMLSVFQASALPHISLRIFISPPSIANIWNSILL. The Zn(2+) site is built by C77, C80, C90, and C93.

It belongs to the bacterial ribosomal protein bL32 family. As to quaternary structure, component of the mitochondrial large ribosomal subunit (mt-LSU). Mature yeast 74S mitochondrial ribosomes consist of a small (37S) and a large (54S) subunit. The 37S small subunit contains a 15S ribosomal RNA (15S mt-rRNA) and at least 32 different proteins. The 54S large subunit contains a 21S rRNA (21S mt-rRNA) and at least 45 different proteins. bL32m has a zinc binding site. MRPL32 precursor is processed by the m-AAA protease, which cleaves the N-terminal transit peptide. Cleavage by the m-AAA protease takes place prior to assembly into the large subunit, an essential step for mitochondrial ribosome (mitoribosome) assembly. Proper processing by the m-AAA protease is dependent on the zinc-binding region within the tightly folded C-terminal domain of MRPL32: zinc-dependent folding halts degradation initiated from the N-terminus and triggers the release of mature mrpl32.

Its subcellular location is the mitochondrion. In terms of biological role, component of the mitochondrial ribosome (mitoribosome), a dedicated translation machinery responsible for the synthesis of mitochondrial genome-encoded proteins, including at least some of the essential transmembrane subunits of the mitochondrial respiratory chain. The mitoribosomes are attached to the mitochondrial inner membrane and translation products are cotranslationally integrated into the membrane. The polypeptide is Large ribosomal subunit protein bL32m (mrpl32) (Schizosaccharomyces pombe (strain 972 / ATCC 24843) (Fission yeast)).